Here is a 76-residue protein sequence, read N- to C-terminus: Large ribosomal subunit protein eL20 (76 aa).

This sequence belongs to the eukaryotic ribosomal protein eL20 family. In terms of assembly, part of the 50S ribosomal subunit. Binds 23S rRNA.

This chain is Large ribosomal subunit protein eL20, found in Methanococcus maripaludis (strain DSM 14266 / JCM 13030 / NBRC 101832 / S2 / LL).